Here is a 237-residue protein sequence, read N- to C-terminus: tRNA (guanine-N(1)-)-methyltransferase (237 aa).

S-adenosyl-L-methionine contacts are provided by residues glycine 113 and 133–138; that span reads MGDYIL.

It belongs to the RNA methyltransferase TrmD family. In terms of assembly, homodimer.

Its subcellular location is the cytoplasm. It carries out the reaction guanosine(37) in tRNA + S-adenosyl-L-methionine = N(1)-methylguanosine(37) in tRNA + S-adenosyl-L-homocysteine + H(+). Specifically methylates guanosine-37 in various tRNAs. The polypeptide is tRNA (guanine-N(1)-)-methyltransferase (Wolinella succinogenes (strain ATCC 29543 / DSM 1740 / CCUG 13145 / JCM 31913 / LMG 7466 / NCTC 11488 / FDC 602W) (Vibrio succinogenes)).